The primary structure comprises 575 residues: Inactive terpenoid synthase 20, chloroplastic (575 aa).

A chloroplast-targeting transit peptide spans 1 to 52 (MEAITKNGSLSQTLVHCGPKSLSSFIPVRCLRFSKNPFPKKLVVTRARTSIN). Mg(2+) contacts are provided by D332, D336, D474, T478, and E482. Positions 332-336 (DDLYD) match the DDXXD motif motif.

The protein belongs to the terpene synthase family. Tpsa subfamily. Predominantly expressed in roots but also in leaves and stems.

The protein localises to the plastid. The protein resides in the chloroplast. Functionally, does not possess diterpene synthase activity. The sequence is that of Inactive terpenoid synthase 20, chloroplastic from Arabidopsis thaliana (Mouse-ear cress).